The sequence spans 211 residues: Uracil phosphoribosyltransferase (211 aa).

Residues Arg78, Arg103, and 130-138 (DPMLATGGT) each bind 5-phospho-alpha-D-ribose 1-diphosphate. Residues Ile196 and 201–203 (GDA) contribute to the uracil site. 5-phospho-alpha-D-ribose 1-diphosphate is bound at residue Asp202.

The protein belongs to the UPRTase family. Mg(2+) is required as a cofactor.

It carries out the reaction UMP + diphosphate = 5-phospho-alpha-D-ribose 1-diphosphate + uracil. It functions in the pathway pyrimidine metabolism; UMP biosynthesis via salvage pathway; UMP from uracil: step 1/1. Allosterically activated by GTP. Its function is as follows. Catalyzes the conversion of uracil and 5-phospho-alpha-D-ribose 1-diphosphate (PRPP) to UMP and diphosphate. The polypeptide is Uracil phosphoribosyltransferase (Kineococcus radiotolerans (strain ATCC BAA-149 / DSM 14245 / SRS30216)).